A 261-amino-acid polypeptide reads, in one-letter code: MSVLQELTKKKYSSLKTMFDDKYCPTFVYSILDQTIPGAVYADDQTFPKSFFIGTESGIYFIAGDQGNRDFHDFIAGYYEEQVKSSKRFTLFSSSDTWDSVLKPILKDDLNQMRRAAFSYQPKSFKKTLQLPKGLVLKRIDEDIISHSTAFNSAYYEEYWNSVSQFASKGFGFAVLHGNHVVSECTSIFLGHNRAEMDIYTLEEYRGLGLAYCVANRFIAFCMENGIVPSWDCDICNNSSIALAAKLGFKTVTEYTIYYSG.

Positions Leu135–Gly261 constitute an N-acetyltransferase domain.

This sequence belongs to the acetyltransferase family.

This is an uncharacterized protein from Bacillus subtilis (strain 168).